Here is a 230-residue protein sequence, read N- to C-terminus: MALSFFKDLPEEHPRHLIPALCRQFYHLGWVTGTGGGMSIKQDNEIYIAPSGVQKERMQPEDLFVQNIDGKDLQLPPEIKGLSKSQCTPLFMLAYRHRNAGAVIHTHSQHAVMATLLWPGKTFRCTHLEMIKGIFDEADERYLRYDEQLIVPIIENTPHERDLADSMYAAMMEYPGCSAVLVRRHGVYVWGKTWEKAKTMSECYDYLFSIAVQMKKAGLNPEKFEKPSLG.

C87 is a substrate binding site. Residues H105 and H107 each coordinate Zn(2+). The Proton donor/acceptor role is filled by E129. H185 serves as a coordination point for Zn(2+).

The protein belongs to the aldolase class II family. MtnB subfamily. Requires Zn(2+) as cofactor.

Its subcellular location is the cytoplasm. It catalyses the reaction 5-(methylsulfanyl)-D-ribulose 1-phosphate = 5-methylsulfanyl-2,3-dioxopentyl phosphate + H2O. It participates in amino-acid biosynthesis; L-methionine biosynthesis via salvage pathway; L-methionine from S-methyl-5-thio-alpha-D-ribose 1-phosphate: step 2/6. Functionally, catalyzes the dehydration of methylthioribulose-1-phosphate (MTRu-1-P) into 2,3-diketo-5-methylthiopentyl-1-phosphate (DK-MTP-1-P). In Drosophila grimshawi (Hawaiian fruit fly), this protein is Probable methylthioribulose-1-phosphate dehydratase.